Reading from the N-terminus, the 273-residue chain is MTILVVDRYYMLMNLLFALTCLLLNLTHCFSPKKFNISAATTSDSDWSIAGSTWYGNPTGYGSDGGACGYGNAVAQPPFSKMVSAGGPSLFKSGKGCGACYQVKCTSKSACSKNPVTVVITDECPGCVKESVHFDLSGTAFGAMAISGQDSQLRNVGELQILYKKVECNYIGKTVTFQVDKGSNANSFAVLVAYVNGDGEIGRIELKQALDSDKWLSMSQSWGAVWKLDVSSPLRAPLSLRVTSLESGKTVVASNVIPANWQPGAIYKSNVNF.

Residues 1–29 form the signal peptide; that stretch reads MTILVVDRYYMLMNLLFALTCLLLNLTHC. N-linked (GlcNAc...) asparagine glycosylation occurs at Asn36. One can recognise an Expansin-like EG45 domain in the interval 65 to 173; sequence GGACGYGNAV…KKVECNYIGK (109 aa). Cystine bridges form between Cys68–Cys97, Cys100–Cys168, and Cys105–Cys111. An Expansin-like CBD domain is found at 186-269; it reads NSFAVLVAYV…NWQPGAIYKS (84 aa).

The protein belongs to the expansin family. Expansin B subfamily.

The protein resides in the secreted. It is found in the cell wall. The protein localises to the membrane. Its function is as follows. May cause loosening and extension of plant cell walls by disrupting non-covalent bonding between cellulose microfibrils and matrix glucans. No enzymatic activity has been found. The chain is Putative expansin-B2 (EXPB2) from Arabidopsis thaliana (Mouse-ear cress).